Consider the following 103-residue polypeptide: Large ribosomal subunit protein bL21 (103 aa).

This sequence belongs to the bacterial ribosomal protein bL21 family. As to quaternary structure, part of the 50S ribosomal subunit. Contacts protein L20.

Its function is as follows. This protein binds to 23S rRNA in the presence of protein L20. This is Large ribosomal subunit protein bL21 from Aeromonas hydrophila subsp. hydrophila (strain ATCC 7966 / DSM 30187 / BCRC 13018 / CCUG 14551 / JCM 1027 / KCTC 2358 / NCIMB 9240 / NCTC 8049).